The chain runs to 619 residues: 4-hydroxyphenylalkanoate adenylyltransferase (619 aa).

The protein belongs to the ATP-dependent AMP-binding enzyme family.

The enzyme catalyses 17-(4-hydroxyphenyl)heptadecanoate + holo-[(phenol)carboxyphthiodiolenone synthase] + ATP = 17-(4-hydroxyphenyl)heptadecanoyl-[(phenol)carboxyphthiodiolenone synthase] + AMP + diphosphate. It catalyses the reaction 19-(4-hydroxyphenyl)nonadecanoate + holo-[(phenol)carboxyphthiodiolenone synthase] + ATP = 19-(4-hydroxyphenyl)nonadecanoyl-[(phenol)carboxyphthiodiolenone synthase] + AMP + diphosphate. It carries out the reaction dodecanoate + ATP + H(+) = dodecanoyl-AMP + diphosphate. It participates in lipid metabolism; fatty acid biosynthesis. Catalyzes the activation of long-chain fatty acids as acyl-adenylates (acyl-AMP), which are then transferred to the multifunctional polyketide synthase PpsA for further chain extension. Involved in the biosynthesis of phenolphthiocerol, which is an important intermediate in the biosynthesis of phenolic glycolipid (PGL), also called mycosid B. The sequence is that of 4-hydroxyphenylalkanoate adenylyltransferase (fadD29) from Mycobacterium tuberculosis (strain ATCC 25618 / H37Rv).